The chain runs to 334 residues: Protein translocase subunit SecF (334 aa).

6 helical membrane passes run 18–38, 144–164, 168–190, 195–217, 258–278, and 279–299; these read VAAG…AVTG, GAAM…AIRF, FGLA…IKIF, SLTV…IIIF, ATLA…WVMA, and FGVV…LLWI.

This sequence belongs to the SecD/SecF family. SecF subfamily. Forms a complex with SecD. Part of the essential Sec protein translocation apparatus which comprises SecA, SecYEG and auxiliary proteins SecDF. Other proteins may also be involved.

The protein resides in the cell inner membrane. In terms of biological role, part of the Sec protein translocase complex. Interacts with the SecYEG preprotein conducting channel. SecDF uses the proton motive force (PMF) to complete protein translocation after the ATP-dependent function of SecA. The polypeptide is Protein translocase subunit SecF (Gemmatimonas aurantiaca (strain DSM 14586 / JCM 11422 / NBRC 100505 / T-27)).